Here is a 436-residue protein sequence, read N- to C-terminus: D-amino acid dehydrogenase (436 aa).

Position 3-17 (3-17 (ILILGSGVIGVTSAW)) interacts with FAD.

It belongs to the DadA oxidoreductase family. FAD is required as a cofactor.

The catalysed reaction is a D-alpha-amino acid + A + H2O = a 2-oxocarboxylate + AH2 + NH4(+). It participates in amino-acid degradation; D-alanine degradation; NH(3) and pyruvate from D-alanine: step 1/1. Its function is as follows. Oxidative deamination of D-amino acids. The polypeptide is D-amino acid dehydrogenase (Photorhabdus laumondii subsp. laumondii (strain DSM 15139 / CIP 105565 / TT01) (Photorhabdus luminescens subsp. laumondii)).